The sequence spans 90 residues: Probable Fe(2+)-trafficking protein (90 aa).

Belongs to the Fe(2+)-trafficking protein family. As to quaternary structure, monomer.

Its function is as follows. Could be a mediator in iron transactions between iron acquisition and iron-requiring processes, such as synthesis and/or repair of Fe-S clusters in biosynthetic enzymes. In Edwardsiella ictaluri (strain 93-146), this protein is Probable Fe(2+)-trafficking protein.